The sequence spans 86 residues: Kappa-theraphotoxin-Cg1c (86 aa).

Residues 1–21 (MKVSVLITLAVLGVMFVWASA) form the signal peptide. The propeptide occupies 22–50 (AELEERGSDHRDSPAWLKSMERIFQSEER). 3 disulfide bridges follow: Cys52-Cys66, Cys59-Cys71, and Cys65-Cys78.

This sequence belongs to the neurotoxin 10 (Hwtx-1) family. 28 (Jztx-11) subfamily. In terms of tissue distribution, expressed by the venom gland.

Its subcellular location is the secreted. Probable ion channel inhibitor. The protein is Kappa-theraphotoxin-Cg1c of Chilobrachys guangxiensis (Chinese earth tiger tarantula).